We begin with the raw amino-acid sequence, 210 residues long: dITP/XTP pyrophosphatase (210 aa).

A substrate-binding site is contributed by 16–21 (SNNKGK). The active-site Proton acceptor is the D79. D79 contributes to the Mg(2+) binding site. Substrate contacts are provided by residues S80, 166–169 (FGYD), K189, and 194–195 (HR).

This sequence belongs to the HAM1 NTPase family. As to quaternary structure, homodimer. It depends on Mg(2+) as a cofactor.

It carries out the reaction XTP + H2O = XMP + diphosphate + H(+). The enzyme catalyses dITP + H2O = dIMP + diphosphate + H(+). The catalysed reaction is ITP + H2O = IMP + diphosphate + H(+). In terms of biological role, pyrophosphatase that catalyzes the hydrolysis of nucleoside triphosphates to their monophosphate derivatives, with a high preference for the non-canonical purine nucleotides XTP (xanthosine triphosphate), dITP (deoxyinosine triphosphate) and ITP. Seems to function as a house-cleaning enzyme that removes non-canonical purine nucleotides from the nucleotide pool, thus preventing their incorporation into DNA/RNA and avoiding chromosomal lesions. The protein is dITP/XTP pyrophosphatase of Acinetobacter baylyi (strain ATCC 33305 / BD413 / ADP1).